The following is a 1014-amino-acid chain: SUMO-specific isopeptidase USPL1 (1014 aa).

2 disordered regions span residues 137-158 and 275-318; these read TFTD…EEQP and EEKP…VSDE. Over residues 275-289 the composition is skewed to basic and acidic residues; that stretch reads EEKPVSLVHTEDQHL. The USP domain maps to 355-636; the sequence is LFWKNEENMC…EFHILFWETD (282 aa). Catalysis depends on Cys-364, which acts as the Nucleophile. Residues 364–631 form an SUMO-binding region; sequence CWLDAMLVML…PFPSSEFHIL (268 aa). The active-site Proton acceptor is His-592. Disordered stretches follow at residues 794-823 and 844-867; these read HPSF…YDKH and NSQP…AGQE. The segment covering 802-815 has biased composition (pro residues); that stretch reads IRPPPPLPPAPKPK.

The protein belongs to the peptidase C19 family.

The protein localises to the nucleus. It localises to the cajal body. Its function is as follows. SUMO-specific isopeptidase involved in protein desumoylation. Specifically binds SUMO proteins with a higher affinity for sumo2 and sumo3 which it cleaves more efficiently. Also able to process full-length SUMO proteins to their mature forms. Plays a key role in RNA polymerase-II-mediated snRNA transcription in the Cajal bodies. Is a component of complexes that can bind to U snRNA genes. The protein is SUMO-specific isopeptidase USPL1 (uspl1) of Danio rerio (Zebrafish).